A 453-amino-acid polypeptide reads, in one-letter code: MTNALQATPKIGFVSLGCPKALVDSEQILTQLRAEGYDTAKSYDGADLVIVNTCGFIDAAVQESLDAIGEALHENGKVIVTGCLGAKKDADGDDIIQKVHPKVLAVTGPHALGEVMDAVHKHMPKPHAPFIDLVPAQGIKLTPKHFAYLKISEGCNHRCSFCIIPSMRGDLVSRPIADVMMEAENLFKAGVKELLVISQDTSAYGVDVKFRMGFWNGKPVKTHMTQLVEALGELAKQYGAWVRLHYVYPYPHVDAIIPMMAEGKILPYLDVPLQHAHPDVLKRMKRPASGEKNIERIQAWRAMCPDLTIRSTFIAGFPGETDAEFEYLLDFLKEAEIDRLGCFAYSPVEGATANDLPNAVPEEVREERRGRVMLLQEEISKKRLQAKVGKTMRVLLDEVNRNGGVARSGADAPEIDGVVYVKPPYEPHLKLKVGEFIDVKITGADAHDLWAEA.

The region spanning 9–124 is the MTTase N-terminal domain; sequence PKIGFVSLGC…VMDAVHKHMP (116 aa). Residues Cys-18, Cys-54, Cys-83, Cys-155, Cys-159, and Cys-162 each contribute to the [4Fe-4S] cluster site. Residues 141 to 382 enclose the Radical SAM core domain; it reads LTPKHFAYLK…MLLQEEISKK (242 aa). The TRAM domain occupies 385–453; it reads QAKVGKTMRV…ADAHDLWAEA (69 aa).

This sequence belongs to the methylthiotransferase family. RimO subfamily. The cofactor is [4Fe-4S] cluster.

The protein localises to the cytoplasm. The catalysed reaction is L-aspartate(89)-[ribosomal protein uS12]-hydrogen + (sulfur carrier)-SH + AH2 + 2 S-adenosyl-L-methionine = 3-methylsulfanyl-L-aspartate(89)-[ribosomal protein uS12]-hydrogen + (sulfur carrier)-H + 5'-deoxyadenosine + L-methionine + A + S-adenosyl-L-homocysteine + 2 H(+). Catalyzes the methylthiolation of an aspartic acid residue of ribosomal protein uS12. The chain is Ribosomal protein uS12 methylthiotransferase RimO from Janthinobacterium sp. (strain Marseille) (Minibacterium massiliensis).